The chain runs to 1407 residues: DNA-directed RNA polymerase subunit beta' (1407 aa).

Cys70, Cys72, Cys85, and Cys88 together coordinate Zn(2+). Asp460, Asp462, and Asp464 together coordinate Mg(2+). 4 residues coordinate Zn(2+): Cys814, Cys888, Cys895, and Cys898.

It belongs to the RNA polymerase beta' chain family. As to quaternary structure, the RNAP catalytic core consists of 2 alpha, 1 beta, 1 beta' and 1 omega subunit. When a sigma factor is associated with the core the holoenzyme is formed, which can initiate transcription. Mg(2+) serves as cofactor. Requires Zn(2+) as cofactor.

The catalysed reaction is RNA(n) + a ribonucleoside 5'-triphosphate = RNA(n+1) + diphosphate. DNA-dependent RNA polymerase catalyzes the transcription of DNA into RNA using the four ribonucleoside triphosphates as substrates. This Citrobacter koseri (strain ATCC BAA-895 / CDC 4225-83 / SGSC4696) protein is DNA-directed RNA polymerase subunit beta'.